The primary structure comprises 239 residues: MLFQKEKVMKGQVLAISGIDTGIGKTVVTGLLARCFAETGWRTITQKIAQTGCEGVSEDIAEHRKLMGIDLQEADLDGTTCPYLFRFPASPHLAATVEGREIDFMTIRRSTFRLQKLYDLVLLEGVGGLLVPLTPELLFADYVRDAGYGLVLVSASRLGSINHTLLSLEACARRGIPVRAIVYNRYFEADERIAANTREVIAAALKRYGFGEAPVIDLNTSGLSAEPGDLQRILNPPGQ.

22–27 contributes to the ATP binding site; sequence GIGKTV. Position 26 (Thr26) interacts with Mg(2+). The active site involves Lys47. Thr51 provides a ligand contact to substrate. ATP contacts are provided by residues Asp59, 124–127, and 184–185; these read EGVG and NR. Mg(2+) contacts are provided by Asp59 and Glu124.

The protein belongs to the dethiobiotin synthetase family. Homodimer. Requires Mg(2+) as cofactor.

Its subcellular location is the cytoplasm. The catalysed reaction is (7R,8S)-7,8-diammoniononanoate + CO2 + ATP = (4R,5S)-dethiobiotin + ADP + phosphate + 3 H(+). Its pathway is cofactor biosynthesis; biotin biosynthesis; biotin from 7,8-diaminononanoate: step 1/2. Catalyzes a mechanistically unusual reaction, the ATP-dependent insertion of CO2 between the N7 and N8 nitrogen atoms of 7,8-diaminopelargonic acid (DAPA, also called 7,8-diammoniononanoate) to form a ureido ring. This is ATP-dependent dethiobiotin synthetase BioD from Chlorobaculum tepidum (strain ATCC 49652 / DSM 12025 / NBRC 103806 / TLS) (Chlorobium tepidum).